The primary structure comprises 107 residues: MEYMFLLMSKFFFVFPIIIYIGPAEIIKPQAAEENSRRRILNPNENKEEIVKRRRRIGSKPPSCEKKCYGCEPCEAIQFPTISSIPHLSPHYANYQPEGWRCHCPPP.

The signal sequence occupies residues 1–24 (MEYMFLLMSKFFFVFPIIIYIGPA). Cystine bridges form between Cys-64/Cys-102, Cys-68/Cys-74, and Cys-71/Cys-104.

Belongs to the plant cysteine rich small secretory peptide family. Epidermal patterning factor subfamily.

The protein localises to the secreted. Controls stomatal patterning. This is EPIDERMAL PATTERNING FACTOR-like protein 3 from Arabidopsis thaliana (Mouse-ear cress).